We begin with the raw amino-acid sequence, 130 residues long: Small ribosomal subunit protein uS11c (130 aa).

Belongs to the universal ribosomal protein uS11 family. As to quaternary structure, part of the 30S ribosomal subunit.

The protein localises to the plastid. It localises to the chloroplast. In Pinus koraiensis (Korean pine), this protein is Small ribosomal subunit protein uS11c.